The following is a 462-amino-acid chain: GTPase Der (462 aa).

2 consecutive EngA-type G domains span residues 3–170 (ITIA…TSQK) and 201–372 (IKIA…FNSI). Residues 9 to 16 (GRTNVGKS), 57 to 61 (DTPGI), 122 to 125 (NKIE), 207 to 214 (GKPNVGKS), 254 to 258 (DTAGI), and 319 to 322 (NKND) contribute to the GTP site. The 85-residue stretch at 373–457 (KKIHTSKITE…SIVLYFKSSK (85 aa)) folds into the KH-like domain.

This sequence belongs to the TRAFAC class TrmE-Era-EngA-EngB-Septin-like GTPase superfamily. EngA (Der) GTPase family. Associates with the 50S ribosomal subunit.

In terms of biological role, GTPase that plays an essential role in the late steps of ribosome biogenesis. The polypeptide is GTPase Der (Buchnera aphidicola subsp. Baizongia pistaciae (strain Bp)).